A 347-amino-acid polypeptide reads, in one-letter code: MENLMTSSTLPPLFADEDGSKESNDLATTGLNHPEVPYSSGATSSTNNPEFVEDLSQGQLLQSESSNAAEGNEQRHEDEQRSKRGGWSKGRKRKKPLRDSNAPKSPLTGYVRFMNERREQLRAKRPEVPFPEITRMLGNEWSKLPPEEKQRYLDEADRDKERYMKELEQYQKTEAYKVFSRKTQDRQKGKSHRQDAARQATHDHEKETEVKERSVFDIPIFTEEFLNHSKAREAELRQLRKSNMEFEERNAALQKHVESMRTAVEKLEVDVIQERSRNTVLQQHLETLRQVLTSSFASMPLPGSGETPTVDTIDSYMNRLHSIILANPQDNENFIATVREVVNRLDR.

Composition is skewed to polar residues over residues 1–10 (MENLMTSSTL) and 40–49 (SGATSSTNNP). Disordered regions lie at residues 1–113 (MENL…YVRF) and 179–211 (FSRK…TEVK). Residues 55–66 (LSQGQLLQSESS) show a composition bias toward low complexity. Residues 72–82 (NEQRHEDEQRS) are compositionally biased toward basic and acidic residues. Positions 83 to 96 (KRGGWSKGRKRKKP) are enriched in basic residues. A DNA-binding region (HMG box) is located at residues 103–171 (PKSPLTGYVR…RYMKELEQYQ (69 aa)). The residue at position 105 (S105) is a Phosphoserine. Residues 182 to 211 (KTQDRQKGKSHRQDAARQATHDHEKETEVK) are compositionally biased toward basic and acidic residues. The stretch at 229–273 (SKAREAELRQLRKSNMEFEERNAALQKHVESMRTAVEKLEVDVIQ) forms a coiled coil.

In terms of assembly, interacts with DTNB. As to expression, ubiquitous.

The protein localises to the nucleus. In terms of biological role, plays a role in neuronal differentiation as chromatin-associated protein. Acts as inhibitor of HMG20B. Overcomes the repressive effects of the neuronal silencer REST and induces the activation of neuronal-specific genes. Involved in the recruitment of the histone methyltransferase KMT2A/MLL1 and consequent increased methylation of histone H3 lysine 4. This is High mobility group protein 20A (HMG20A) from Homo sapiens (Human).